The following is a 147-amino-acid chain: Deoxyuridine 5'-triphosphate nucleotidohydrolase (147 aa).

Substrate is bound by residues 63 to 65 (RSG), Asn76, and 80 to 82 (TID).

Belongs to the dUTPase family. Mg(2+) is required as a cofactor.

It carries out the reaction dUTP + H2O = dUMP + diphosphate + H(+). Its pathway is pyrimidine metabolism; dUMP biosynthesis; dUMP from dCTP (dUTP route): step 2/2. In terms of biological role, this enzyme is involved in nucleotide metabolism: it produces dUMP, the immediate precursor of thymidine nucleotides and it decreases the intracellular concentration of dUTP so that uracil cannot be incorporated into DNA. In Chlamydia caviae (strain ATCC VR-813 / DSM 19441 / 03DC25 / GPIC) (Chlamydophila caviae), this protein is Deoxyuridine 5'-triphosphate nucleotidohydrolase.